We begin with the raw amino-acid sequence, 177 residues long: Endoribonuclease YbeY (177 aa).

The Zn(2+) site is built by His-114, His-118, and His-124. The segment at 154 to 177 (SYPEAIPTNPAPRRQASSSAGHIE) is disordered. Polar residues predominate over residues 168 to 177 (QASSSAGHIE).

It belongs to the endoribonuclease YbeY family. It depends on Zn(2+) as a cofactor.

Its subcellular location is the cytoplasm. Single strand-specific metallo-endoribonuclease involved in late-stage 70S ribosome quality control and in maturation of the 3' terminus of the 16S rRNA. The protein is Endoribonuclease YbeY of Cellvibrio japonicus (strain Ueda107) (Pseudomonas fluorescens subsp. cellulosa).